Consider the following 596-residue polypeptide: V-type ATP synthase alpha chain (596 aa).

Residue 233-240 (GPFGAGKT) participates in ATP binding.

This sequence belongs to the ATPase alpha/beta chains family.

The catalysed reaction is ATP + H2O + 4 H(+)(in) = ADP + phosphate + 5 H(+)(out). Functionally, produces ATP from ADP in the presence of a proton gradient across the membrane. The V-type alpha chain is a catalytic subunit. The polypeptide is V-type ATP synthase alpha chain (Streptococcus gordonii (strain Challis / ATCC 35105 / BCRC 15272 / CH1 / DL1 / V288)).